A 154-amino-acid polypeptide reads, in one-letter code: uncharacterized protein (154 aa).

Residues 13 to 128 (SKGVLLLRTL…VFTFVAVDNN (116 aa)) enclose the HotDog ACOT-type domain.

Belongs to the acyl coenzyme A hydrolase family.

This is an uncharacterized protein from Haemophilus influenzae (strain ATCC 51907 / DSM 11121 / KW20 / Rd).